A 189-amino-acid polypeptide reads, in one-letter code: uncharacterized protein (189 aa).

Basic and acidic residues predominate over residues 105–115 (EKLEKEEESKT). The tract at residues 105–189 (EKLEKEEESK…TDDEKTEVST (85 aa)) is disordered. The span at 116 to 136 (AKKRAKRLRQKAAAKKRKLTK) shows a compositional bias: basic residues. Over residues 141 to 151 (SDESSSDDSDS) the composition is skewed to acidic residues. Basic and acidic residues predominate over residues 161 to 177 (SEGKQNTEVEDKDKVEK). Residues 178 to 189 (EETDDEKTEVST) show a composition bias toward acidic residues.

This is an uncharacterized protein from Caenorhabditis elegans.